Reading from the N-terminus, the 129-residue chain is M-zodatoxin-Lt8e (129 aa).

An N-terminal signal peptide occupies residues 1 to 20; the sequence is MKYFVVALALVAAFVCIAES. A propeptide spanning residues 21–60 is cleaved from the precursor; sequence KPAESEHELAEVEEENELADLEDAVWLEHLADLSDLEEAR. Residues 57–60 carry the Processing quadruplet motif motif; that stretch reads EEAR.

In terms of processing, cleavage of the propeptide depends on the processing quadruplet motif (XXXR, with at least one of X being E). As to expression, expressed by the venom gland.

It localises to the secreted. Functionally, insecticidal, cytolytic and antimicrobial peptide. Forms voltage-dependent, ion-permeable channels in membranes. At high concentration causes cell membrane lysis. This Lachesana tarabaevi (Spider) protein is M-zodatoxin-Lt8e (cit 1-5).